Consider the following 316-residue polypeptide: HPr kinase/phosphorylase (316 aa).

Residues H143 and K164 contribute to the active site. An ATP-binding site is contributed by 158–165; the sequence is GEAGSGKS. A Mg(2+)-binding site is contributed by S165. The active-site Proton acceptor; for phosphorylation activity. Proton donor; for dephosphorylation activity is D182. The segment at 206 to 215 is important for the catalytic mechanism of both phosphorylation and dephosphorylation; sequence LEVRGLGVLN. E207 contributes to the Mg(2+) binding site. R251 is an active-site residue. Residues 272–277 form an important for the catalytic mechanism of dephosphorylation region; that stretch reads PVMPGR.

It belongs to the HPrK/P family. As to quaternary structure, homohexamer. Mg(2+) serves as cofactor.

It carries out the reaction [HPr protein]-L-serine + ATP = [HPr protein]-O-phospho-L-serine + ADP + H(+). The catalysed reaction is [HPr protein]-O-phospho-L-serine + phosphate + H(+) = [HPr protein]-L-serine + diphosphate. Catalyzes the ATP- as well as the pyrophosphate-dependent phosphorylation of a specific serine residue in HPr, a phosphocarrier protein of the phosphoenolpyruvate-dependent sugar phosphotransferase system (PTS). HprK/P also catalyzes the pyrophosphate-producing, inorganic phosphate-dependent dephosphorylation (phosphorolysis) of seryl-phosphorylated HPr (P-Ser-HPr). This chain is HPr kinase/phosphorylase, found in Xylella fastidiosa (strain 9a5c).